Here is a 195-residue protein sequence, read N- to C-terminus: Ribosome maturation factor RimM (195 aa).

One can recognise a PRC barrel domain in the interval 101–191 (ADEWYPKDLI…YLTLDPPGGL (91 aa)).

Belongs to the RimM family. As to quaternary structure, binds ribosomal protein uS19.

The protein localises to the cytoplasm. Its function is as follows. An accessory protein needed during the final step in the assembly of 30S ribosomal subunit, possibly for assembly of the head region. Essential for efficient processing of 16S rRNA. May be needed both before and after RbfA during the maturation of 16S rRNA. It has affinity for free ribosomal 30S subunits but not for 70S ribosomes. This Bifidobacterium adolescentis (strain ATCC 15703 / DSM 20083 / NCTC 11814 / E194a) protein is Ribosome maturation factor RimM.